Here is a 554-residue protein sequence, read N- to C-terminus: Arginine--tRNA ligase (554 aa).

A 'HIGH' region motif is present at residues A129–H139.

This sequence belongs to the class-I aminoacyl-tRNA synthetase family. Monomer.

The protein localises to the cytoplasm. The catalysed reaction is tRNA(Arg) + L-arginine + ATP = L-arginyl-tRNA(Arg) + AMP + diphosphate. This is Arginine--tRNA ligase from Geobacter sp. (strain M21).